Here is a 131-residue protein sequence, read N- to C-terminus: Small ribosomal subunit protein uS8 (131 aa).

This sequence belongs to the universal ribosomal protein uS8 family. Part of the 30S ribosomal subunit. Contacts proteins S5 and S12.

Functionally, one of the primary rRNA binding proteins, it binds directly to 16S rRNA central domain where it helps coordinate assembly of the platform of the 30S subunit. This Desulforudis audaxviator (strain MP104C) protein is Small ribosomal subunit protein uS8.